A 397-amino-acid chain; its full sequence is Acetate kinase (397 aa).

Asn8 contributes to the Mg(2+) binding site. ATP is bound at residue Lys15. Arg89 serves as a coordination point for substrate. Asp146 (proton donor/acceptor) is an active-site residue. Residues 206-210 (HLGNG), 280-282 (DMR), and 328-332 (GVGEN) contribute to the ATP site. A Mg(2+)-binding site is contributed by Glu382.

Belongs to the acetokinase family. As to quaternary structure, homodimer. Requires Mg(2+) as cofactor. It depends on Mn(2+) as a cofactor.

The protein resides in the cytoplasm. The enzyme catalyses acetate + ATP = acetyl phosphate + ADP. It functions in the pathway metabolic intermediate biosynthesis; acetyl-CoA biosynthesis; acetyl-CoA from acetate: step 1/2. Functionally, catalyzes the formation of acetyl phosphate from acetate and ATP. Can also catalyze the reverse reaction. The sequence is that of Acetate kinase from Leifsonia xyli subsp. xyli (strain CTCB07).